Consider the following 511-residue polypeptide: DELLA protein RGL1 (511 aa).

A compositionally biased stretch (basic and acidic residues) spans 1–11; that stretch reads MKREHNHRESS. Residues 1–20 are disordered; it reads MKREHNHRESSAGEGGSSSM. Positions 32-36 match the DELLA motif motif; it reads DELLV. The LEXLE motif signature appears at 54-58; that stretch reads LEQLE. Residues 73–77 carry the VHYNP motif motif; sequence VHYNP. One can recognise a GRAS domain in the interval 143-506; that stretch reads LDSQETGVRL…RPLIATSAWR (364 aa). The leucine repeat I (LRI) stretch occupies residues 150–204; sequence VRLVHALLACAEAVQQNNLKLADALVKHVGLLASSQAGAMRKVATYFAEGLARRI. Positions 157–161 match the LxCxE motif motif; it reads LACAE. The tract at residues 223–288 is VHIID; the sequence is QIHFYESCPY…NGPPDFRLTG (66 aa). A VHIID motif is present at residues 254 to 258; that stretch reads VHVID. Positions 298–330 are leucine repeat II (LRII); that stretch reads EVGWKLGQLASTIGVNFEFKSIALNNLSDLKPE. The interval 341 to 427 is PFYRE; it reads VAVNSVFELH…ELFLGRQILN (87 aa). An LXXLL motif motif is present at residues 349 to 353; it reads LHRLL. The tract at residues 430–506 is SAW; that stretch reads ACEGEDRVER…RPLIATSAWR (77 aa).

Belongs to the GRAS family. DELLA subfamily. Interacts directly with the GID2/SLY1 component of the SCF(GID2) complex. Interacts (via N-terminus) with GID1A, GID1B and GID1B (via N-terminus). Interacts with the BOI proteins BOI, BRG1, BRG2 and BRG3. Binds to and coactivates GAF1/IDD2 and ENY/IDD1. Phosphorylated. In terms of processing, may be ubiquitinated, as suggested by its interaction with GID2. Ubiquitination is however unsure since in contrast to other DELLA proteins, it is not ubiquitinated and degraded upon GA application. Nevertheless, ubiquitination may be triggered by other processes. Predominantly expressed in germinating seeds and flowers and siliques. Highly expressed in inflorescences and weakly or not expressed in rosette leaves, etiolated seedlings, siliques, mature stems and roots. RGA and GAI transcripts were detected at slightly varying levels in all tissues examined. RGL2 signal was undetected, and RGL3 signal was very weak in all tissues examined (rosette leaves, seedlings, inflorescences, and siliques) except inflorescences. In the flower, it is expressed in developing ovules as well as in developing anthers throughout microspore development.

The protein resides in the nucleus. In terms of biological role, probable transcriptional regulator that acts as a repressor of the gibberellin (GA) signaling pathway. No effect of the BOI proteins on its stability. Probably acts by participating in large multiprotein complexes that repress transcription of GA-inducible genes. Has overlapping but distinct roles in GA signaling compared to RGA and GAI. Regulates the floral development. May also participate in seed germination and in ovule and anther development. Its activity is probably regulated by other phytohormones such as auxin and ethylene. This Arabidopsis thaliana (Mouse-ear cress) protein is DELLA protein RGL1 (RGL1).